A 463-amino-acid polypeptide reads, in one-letter code: Quinolone resistance protein NorB (463 aa).

Helical transmembrane passes span 17-37 (IGIV…VNVV), 53-73 (IAVS…GGLA), 86-106 (IILN…LLLI), 107-127 (IGRL…LSII), 142-162 (YWSI…GAVA), 165-185 (LGWR…LFLI), 201-221 (FDIK…ILIT), 230-250 (SLLF…FIVL), 273-293 (TASN…NTFV), 299-319 (YSSL…LIMI), 334-354 (PMLI…LTFL), 357-377 (ILYV…LGIY), 403-423 (MASA…YAIV), and 435-455 (IALW…LLLV).

The protein belongs to the major facilitator superfamily. TCR/Tet family.

It localises to the cell membrane. Multidrug efflux pump that acts independently of NorA and is one of the factors that confers resistance against diverse quinolones and chemical compounds. The chain is Quinolone resistance protein NorB (norB) from Staphylococcus aureus (strain MSSA476).